The sequence spans 306 residues: Agmatinase (306 aa).

Mn(2+) contacts are provided by His126, Asp149, His151, Asp153, Asp230, and Asp232.

Belongs to the arginase family. Agmatinase subfamily. It depends on Mn(2+) as a cofactor.

It catalyses the reaction agmatine + H2O = urea + putrescine. Its pathway is amine and polyamine biosynthesis; putrescine biosynthesis via agmatine pathway; putrescine from agmatine: step 1/1. Catalyzes the formation of putrescine from agmatine. In Citrobacter koseri (strain ATCC BAA-895 / CDC 4225-83 / SGSC4696), this protein is Agmatinase.